Here is a 213-residue protein sequence, read N- to C-terminus: MKVVAFERSVQGTGASRRLRNSGKTPGIVYGSKDPALVIELDHNALFHALRKEAFHSSILDLEIDGKAQKVLLRDYQMHPFKPLVLHIDFQRVSASEKVHMRVPLHFTNADTSAAVKLQGAVISHILTELEVSCLPADLPEFVEVDLAKIEVGHGIHAKDIALPKGVTLVLHVEQENPVLANARIPAVKAAEPTDAPTAPAAAPGAEAPKDKA.

Low complexity predominate over residues Ala-191 to Glu-207. The interval Ala-191–Ala-213 is disordered.

This sequence belongs to the bacterial ribosomal protein bL25 family. CTC subfamily. In terms of assembly, part of the 50S ribosomal subunit; part of the 5S rRNA/L5/L18/L25 subcomplex. Contacts the 5S rRNA. Binds to the 5S rRNA independently of L5 and L18.

This is one of the proteins that binds to the 5S RNA in the ribosome where it forms part of the central protuberance. The sequence is that of Large ribosomal subunit protein bL25 from Polynucleobacter asymbioticus (strain DSM 18221 / CIP 109841 / QLW-P1DMWA-1) (Polynucleobacter necessarius subsp. asymbioticus).